The chain runs to 156 residues: Transcription inhibitor protein Gfh1 (156 aa).

The stretch at 1 to 74 (MAREVKLTKA…LEDILSRAVI (74 aa)) forms a coiled coil.

It belongs to the GreA/GreB family. As to quaternary structure, interacts with RNAP.

Inhibits all catalytic activities of RNA polymerase (RNAP) by partially occluding its substrate-binding site and preventing NTP binding. This is Transcription inhibitor protein Gfh1 (gfh1) from Thermus thermophilus (strain ATCC BAA-163 / DSM 7039 / HB27).